A 330-amino-acid chain; its full sequence is Daunorubicin/doxorubicin resistance ATP-binding protein DrrA (330 aa).

The ABC transporter domain maps to 9–239 (IETSGLVKVY…LGSNVLRLRL (231 aa)). 41–48 (GPNGAGKS) provides a ligand contact to ATP.

Belongs to the ABC transporter superfamily. Drug exporter-1 (DrugE1) (TC 3.A.1.105) family. The complex is composed of two ATP-binding proteins (DrrA) and two transmembrane proteins (DrrB).

It is found in the cell membrane. It carries out the reaction daunorubicin(in) + ATP + H2O = daunorubicin(out) + ADP + phosphate + H(+). In terms of biological role, part of the ABC transporter complex DrrAB involved in daunorubicin and doxorubicin resistance. Responsible for energy coupling to the transport system. Binds ATP or GTP. The polypeptide is Daunorubicin/doxorubicin resistance ATP-binding protein DrrA (drrA) (Streptomyces peucetius).